A 60-amino-acid polypeptide reads, in one-letter code: Myrmicitoxin(1)-Pr4a (60 aa).

The signal sequence occupies residues 1-23 (MKAIIFLFAVLTVVAIIIPIISG). A propeptide spanning residues 24-33 (EPNAGPHAAS) is cleaved from the precursor. Q59 is modified (glutamine amide).

This sequence belongs to the formicidae venom clade 2 family. In terms of tissue distribution, expressed by the venom gland.

The protein localises to the secreted. Its function is as follows. Toxin that causes a rapid and irreversible paralysis when intrathoracically injected into insects (blowflies). Does not cause spontaneous nocifensive behaviors by intraplantar injection in mice. In Pogonomyrmex rugosus (Desert harvester ant), this protein is Myrmicitoxin(1)-Pr4a.